Here is a 240-residue protein sequence, read N- to C-terminus: Large ribosomal subunit protein uL2 (240 aa).

Positions 1 to 11 (MGKRLISQNRG) are enriched in polar residues. Disordered regions lie at residues 1–26 (MGKR…KRKG) and 206–240 (GGGR…TGRK). Composition is skewed to basic residues over residues 13-26 (GTPK…KRKG) and 228-240 (KVGH…TGRK).

It belongs to the universal ribosomal protein uL2 family. Part of the 50S ribosomal subunit. Forms a bridge to the 30S subunit in the 70S ribosome.

One of the primary rRNA binding proteins. Required for association of the 30S and 50S subunits to form the 70S ribosome, for tRNA binding and peptide bond formation. It has been suggested to have peptidyltransferase activity; this is somewhat controversial. Makes several contacts with the 16S rRNA in the 70S ribosome. The protein is Large ribosomal subunit protein uL2 of Methanococcus vannielii (strain ATCC 35089 / DSM 1224 / JCM 13029 / OCM 148 / SB).